A 513-amino-acid chain; its full sequence is uncharacterized protein (513 aa).

5 helical membrane passes run 262–282 (FAIF…FWQL), 304–324 (YMFL…ITYH), 341–361 (EPIP…FEAL), 382–402 (LVIG…VIIV), and 429–449 (MFLA…ILVL). The disordered stretch occupies residues 489–513 (PGTYSRGNGQKGAKREDPKDEENNI). Basic and acidic residues predominate over residues 501–513 (AKREDPKDEENNI).

It belongs to the GerABKA family.

Its subcellular location is the cell membrane. This is an uncharacterized protein from Bacillus subtilis (strain 168).